A 380-amino-acid polypeptide reads, in one-letter code: Putative glutamate--cysteine ligase 2-2 (380 aa).

This sequence belongs to the glutamate--cysteine ligase type 2 family. YbdK subfamily.

The enzyme catalyses L-cysteine + L-glutamate + ATP = gamma-L-glutamyl-L-cysteine + ADP + phosphate + H(+). Its function is as follows. ATP-dependent carboxylate-amine ligase which exhibits weak glutamate--cysteine ligase activity. This chain is Putative glutamate--cysteine ligase 2-2, found in Nocardia farcinica (strain IFM 10152).